Consider the following 429-residue polypeptide: MGLTAKLDKLKLKTTSEDIEDDSGHAKPDNSDDIDEVDSEYQNILLSIIAQLRPGMDLSKITLPTFILEKKSMLERITNFFQIPKLLIDSNSIEDPLDRFIGVLRWYLASWHISPKAVKKPLNPVLGEVFTCYWDELPNNKSAYYLSEQISHHPPKSSYFYIMPEEKIRVDGVVIPKSRFLGNSSAAIMEGCGYVTLGKWDNEVYVMNQPNVYVRGILFGKMRTELGDHMYVKCERNGLEANIEFKTKGFIYGTYDAIEGIIKDSETQKELFQISGKWNEVMYIKNIKTGKKEVLYDTRGSKTLKPKVRPLEEQWDFESRKLWKPTIAGLAKRNHELATEEKSKVENEQRIKAKKRLEDGVEFHPKFFREVNENDNGVKNLEYVIYKKFDLKEDPEVLRERLFTVAPIVPGQKFDEKFHYPAFKKPESN.

The protein belongs to the OSBP family.

This chain is Oxysterol-binding protein-like protein OBPalpha (OBPALPHA), found in Candida albicans (strain SC5314 / ATCC MYA-2876) (Yeast).